A 362-amino-acid polypeptide reads, in one-letter code: Peptide chain release factor 1 (362 aa).

Gln-240 carries the post-translational modification N5-methylglutamine.

The protein belongs to the prokaryotic/mitochondrial release factor family. In terms of processing, methylated by PrmC. Methylation increases the termination efficiency of RF1.

It is found in the cytoplasm. In terms of biological role, peptide chain release factor 1 directs the termination of translation in response to the peptide chain termination codons UAG and UAA. The chain is Peptide chain release factor 1 from Bifidobacterium adolescentis (strain ATCC 15703 / DSM 20083 / NCTC 11814 / E194a).